The sequence spans 330 residues: Mas-related G-protein coupled receptor member X2 (330 aa).

Over 1–33 (MDPTTPAWGNESTTMNGNDQALPLLCGKETLIP) the chain is Extracellular. The helical transmembrane segment at 34–54 (VFLILFIALVGLVGNGFVLWL) threads the bilayer. At 55–63 (LGFCMRRNA) the chain is on the cytoplasmic side. The chain crosses the membrane as a helical span at residues 64–84 (FSVYVLSLAGADFLFLCFQLI). Residues 85–96 (NCLVYLSNFFCS) are Extracellular-facing. Residues 97–117 (ISIDFPSFFTTVMTCAYLAGL) form a helical membrane-spanning segment. At 118–144 (SMLSTISTERCLSVLWPIWYRCRRPRH) the chain is on the cytoplasmic side. A helical membrane pass occupies residues 145–165 (LSAVVCVLLWALSLLLSILEG). The Extracellular portion of the chain corresponds to 166–184 (KFCGFFFSDGDSGWCQTFD). Residues 185–205 (FITAAWLIFLFMVLCGSSLAL) form a helical membrane-spanning segment. Residues 206–228 (LVRILCGSRGLPLTRLYLTILLT) are Cytoplasmic-facing. A helical membrane pass occupies residues 229–249 (VLVFLLCGLPFGIQWFLILWI). Residues 250–264 (WENSDVLFCHIHPVS) lie on the Extracellular side of the membrane. Residues 265-285 (VVLSSLNSSANPIIYFFVGTF) form a helical membrane-spanning segment. At 286-330 (RKQWRLQQPILKLALQRALQDTAEVDHSEGCFRQGTPEMSRSSLV) the chain is on the cytoplasmic side.

Belongs to the G-protein coupled receptor 1 family. Mas subfamily.

The protein localises to the cell membrane. In terms of biological role, mast cell-specific receptor for basic secretagogues, i.e. cationic amphiphilic drugs, as well as endo- or exogenous peptides, consisting of a basic head group and a hydrophobic core. Recognizes and binds small molecules containing a cyclized tetrahydroisoquinoline (THIQ), such as non-steroidal neuromuscular blocking drugs (NMBDs), including tubocurarine and atracurium. In response to these compounds, mediates pseudo-allergic reactions characterized by histamine release, inflammation and airway contraction. This is Mas-related G-protein coupled receptor member X2 (MRGPRX2) from Pongo pygmaeus (Bornean orangutan).